Here is a 204-residue protein sequence, read N- to C-terminus: FMN-dependent NADH:quinone oxidoreductase (204 aa).

Residues Ser-10, 15–17 (SLS), and 139–142 (TSGG) each bind FMN.

Belongs to the azoreductase type 1 family. In terms of assembly, homodimer. It depends on FMN as a cofactor.

The enzyme catalyses 2 a quinone + NADH + H(+) = 2 a 1,4-benzosemiquinone + NAD(+). It catalyses the reaction N,N-dimethyl-1,4-phenylenediamine + anthranilate + 2 NAD(+) = 2-(4-dimethylaminophenyl)diazenylbenzoate + 2 NADH + 2 H(+). Quinone reductase that provides resistance to thiol-specific stress caused by electrophilic quinones. In terms of biological role, also exhibits azoreductase activity. Catalyzes the reductive cleavage of the azo bond in aromatic azo compounds to the corresponding amines. The sequence is that of FMN-dependent NADH:quinone oxidoreductase from Rhizobium leguminosarum bv. trifolii (strain WSM2304).